The chain runs to 141 residues: Granulocyte-macrophage colony-stimulating factor (141 aa).

The first 17 residues, 1–17 (MWLQNLLFLGIVVYSLS), serve as a signal peptide directing secretion. The O-linked (GalNAc...) serine glycan is linked to serine 22. Threonine 27 carries an O-linked (GalNAc...) threonine glycan. 2 disulfide bridges follow: cysteine 68–cysteine 110 and cysteine 102–cysteine 135. N-linked (GlcNAc...) asparagine glycosylation is found at asparagine 83 and asparagine 92.

Belongs to the GM-CSF family. Monomer. The signaling GM-CSF receptor complex is a dodecamer of two head-to-head hexamers of two alpha, two beta, and two ligand subunits.

Its subcellular location is the secreted. Functionally, cytokine that stimulates the growth and differentiation of hematopoietic precursor cells from various lineages, including granulocytes, macrophages, eosinophils and erythrocytes. The polypeptide is Granulocyte-macrophage colony-stimulating factor (Csf2) (Mus musculus (Mouse)).